The primary structure comprises 212 residues: MRCLTMPMLLRALAQAQAARAGHASVRGLHSSAVAATYKYVNLREPSMDMKSVTDRAAQTLLWTELIRGLGMTLSYLFREPATINYPFEKGPLSPRFRGEHALRRYPSGEERCIACKLCEAVCPAQAITIEAEPRADGSRRTTRYDIDMTKCIYCGFCQEACPVDAIVEGPNFEFSTETHEELLYNKEKLLNNGDKWEAEIAANIQADYLYR.

The transit peptide at 1 to 36 (MRCLTMPMLLRALAQAQAARAGHASVRGLHSSAVAA) directs the protein to the mitochondrion. 2 consecutive 4Fe-4S ferredoxin-type domains span residues 104-133 (RRYPSGEERCIACKLCEAVCPAQAITIEAE) and 143-172 (TRYDIDMTKCIYCGFCQEACPVDAIVEGPN). [4Fe-4S] cluster-binding residues include Cys113, Cys116, Cys119, Cys123, Cys152, Cys155, Cys158, and Cys162.

Belongs to the complex I 23 kDa subunit family. In terms of assembly, core subunit of respiratory chain NADH dehydrogenase (Complex I) which is composed of 45 different subunits. This is a component of the iron-sulfur (IP) fragment of the enzyme. Interacts with RAB5IF. [4Fe-4S] cluster is required as a cofactor.

The protein localises to the mitochondrion inner membrane. It carries out the reaction a ubiquinone + NADH + 5 H(+)(in) = a ubiquinol + NAD(+) + 4 H(+)(out). Functionally, core subunit of the mitochondrial membrane respiratory chain NADH dehydrogenase (Complex I) which catalyzes electron transfer from NADH through the respiratory chain, using ubiquinone as an electron acceptor. Essential for the catalytic activity and assembly of complex I. This is NADH dehydrogenase [ubiquinone] iron-sulfur protein 8, mitochondrial (NDUFS8) from Bos taurus (Bovine).